A 269-amino-acid chain; its full sequence is MLLLELPIKCRMCGRFLRQLLAQESQHSTPVGRFLLPMLMGFRLLILVSSGPGVFGNDENEFICHLGQPGCKTICYDVFRPLSPLRFWAFQVILMAVPSAIYVAFTLYHVIGYWEVPGKENKEQETQISKGDHSKDVSGAKSLKLLWAYVAHLGVRLALEGAALGVQYNLYGFKMSSTFICREDPCIGSTTCFQSHPSEKTIFLNIMFGISGACFLFIFLELALLGLGRFWRIYKHKLSFLKKLPTSESSVRSKDTTDELSVVEAKEPF.

The Extracellular portion of the chain corresponds to 1-33; it reads MLLLELPIKCRMCGRFLRQLLAQESQHSTPVGR. A helical membrane pass occupies residues 34–54; that stretch reads FLLPMLMGFRLLILVSSGPGV. Residues 55-86 are Cytoplasmic-facing; it reads FGNDENEFICHLGQPGCKTICYDVFRPLSPLR. A helical membrane pass occupies residues 87-107; sequence FWAFQVILMAVPSAIYVAFTL. Topologically, residues 108–145 are extracellular; that stretch reads YHVIGYWEVPGKENKEQETQISKGDHSKDVSGAKSLKL. The helical transmembrane segment at 146–166 threads the bilayer; sequence LWAYVAHLGVRLALEGAALGV. At 167–205 the chain is on the cytoplasmic side; sequence QYNLYGFKMSSTFICREDPCIGSTTCFQSHPSEKTIFLN. The helical transmembrane segment at 206 to 226 threads the bilayer; that stretch reads IMFGISGACFLFIFLELALLG. The Extracellular segment spans residues 227–269; that stretch reads LGRFWRIYKHKLSFLKKLPTSESSVRSKDTTDELSVVEAKEPF. Ser261 is modified (phosphoserine).

Belongs to the connexin family. Gamma-type subfamily. A connexon is composed of a hexamer of connexins. CNS specific. Expression is restricted to brain, spinal cord, and sciatic nerve.

It is found in the cell membrane. The protein localises to the cell junction. Its subcellular location is the gap junction. One gap junction consists of a cluster of closely packed pairs of transmembrane channels, the connexons, through which materials of low MW diffuse from one cell to a neighboring cell. This chain is Gap junction gamma-3 protein (Gjc3), found in Mus musculus (Mouse).